Reading from the N-terminus, the 293-residue chain is Glutamyl-Q tRNA(Asp) synthetase (293 aa).

L-glutamate contacts are provided by residues 9–13 and E45; that span reads RFAPS. Residues 12-22 carry the 'HIGH' region motif; the sequence is PSPSGSLHFGS. Residues C101, C103, Y115, and C119 each contribute to the Zn(2+) site. Positions 172 and 190 each coordinate L-glutamate. The 'KMSKS' region motif lies at 228 to 232; sequence KLSKQ. K231 is a binding site for ATP.

Belongs to the class-I aminoacyl-tRNA synthetase family. GluQ subfamily. The cofactor is Zn(2+).

Catalyzes the tRNA-independent activation of glutamate in presence of ATP and the subsequent transfer of glutamate onto a tRNA(Asp). Glutamate is transferred on the 2-amino-5-(4,5-dihydroxy-2-cyclopenten-1-yl) moiety of the queuosine in the wobble position of the QUC anticodon. The protein is Glutamyl-Q tRNA(Asp) synthetase of Shewanella frigidimarina (strain NCIMB 400).